Consider the following 561-residue polypeptide: Formate--tetrahydrofolate ligase (561 aa).

An ATP-binding site is contributed by 66-73 (TPAGEGKT).

Belongs to the formate--tetrahydrofolate ligase family.

The enzyme catalyses (6S)-5,6,7,8-tetrahydrofolate + formate + ATP = (6R)-10-formyltetrahydrofolate + ADP + phosphate. It participates in one-carbon metabolism; tetrahydrofolate interconversion. This is Formate--tetrahydrofolate ligase from Methylibium petroleiphilum (strain ATCC BAA-1232 / LMG 22953 / PM1).